The chain runs to 313 residues: L-lactate dehydrogenase 1 (313 aa).

4 residues coordinate NAD(+): valine 15, aspartate 36, arginine 41, and tyrosine 66. Substrate contacts are provided by residues glutamine 83, arginine 89, and 121-124; that span reads NPVD. NAD(+) is bound by residues 119–121 and serine 144; that span reads ASN. Position 149-152 (149-152) interacts with substrate; sequence DTAR. Positions 154 and 169 each coordinate beta-D-fructose 1,6-bisphosphate. Catalysis depends on histidine 176, which acts as the Proton acceptor. Phosphotyrosine is present on tyrosine 218. A substrate-binding site is contributed by threonine 227.

It belongs to the LDH/MDH superfamily. LDH family. Homotetramer.

It localises to the cytoplasm. The catalysed reaction is (S)-lactate + NAD(+) = pyruvate + NADH + H(+). It functions in the pathway fermentation; pyruvate fermentation to lactate; (S)-lactate from pyruvate: step 1/1. With respect to regulation, allosterically activated by fructose 1,6-bisphosphate (FBP). In terms of biological role, catalyzes the conversion of lactate to pyruvate. The protein is L-lactate dehydrogenase 1 of Listeria innocua serovar 6a (strain ATCC BAA-680 / CLIP 11262).